The following is a 171-amino-acid chain: Ribosome maturation factor RimM (171 aa).

A PRC barrel domain is found at 96 to 170 (PDSYYHFQLE…TMTVRLPDGL (75 aa)).

The protein belongs to the RimM family. In terms of assembly, binds ribosomal protein uS19.

The protein resides in the cytoplasm. Functionally, an accessory protein needed during the final step in the assembly of 30S ribosomal subunit, possibly for assembly of the head region. Essential for efficient processing of 16S rRNA. May be needed both before and after RbfA during the maturation of 16S rRNA. It has affinity for free ribosomal 30S subunits but not for 70S ribosomes. This Heliobacterium modesticaldum (strain ATCC 51547 / Ice1) protein is Ribosome maturation factor RimM.